The primary structure comprises 97 residues: U6-theraphotoxin-Hhn1a 1 (97 aa).

An N-terminal signal peptide occupies residues 1–33; sequence MLIKQFSRRSKNMKVQILLAFAALFVLAVGSYA. A propeptide spanning residues 34 to 61 is cleaved from the precursor; it reads SESKKLDLRDALFSAMFSADYQLNPQER. Intrachain disulfides connect cysteine 63/cysteine 77, cysteine 70/cysteine 82, and cysteine 76/cysteine 89.

This sequence belongs to the neurotoxin 10 (Hwtx-1) family. 12 (Hntx-12) subfamily. In terms of tissue distribution, expressed by the venom gland.

It localises to the secreted. Ion channel inhibitor. This Cyriopagopus hainanus (Chinese bird spider) protein is U6-theraphotoxin-Hhn1a 1.